The following is a 140-amino-acid chain: Calcium-binding protein B (140 aa).

EF-hand domains are found at residues 38–73 (ATLS…INQP) and 74–109 (KTYL…KTSS). Residues D51, N53, S55, D57, and E62 each coordinate Ca(2+).

This Dictyostelium discoideum (Social amoeba) protein is Calcium-binding protein B (cbpB).